We begin with the raw amino-acid sequence, 351 residues long: Protein-glutamate methylesterase/protein-glutamine glutaminase (351 aa).

The 118-residue stretch at 3-120 folds into the Response regulatory domain; it reads KTLVVDDSAL…EISKIENELV (118 aa). The residue at position 54 (Asp54) is a 4-aspartylphosphate. The CheB-type methylesterase domain maps to 160–347; it reads ILIGSSTGGP…EQIVRMIEVK (188 aa). Residues Ser165, His192, and Asp289 contribute to the active site.

This sequence belongs to the CheB family. Post-translationally, phosphorylated by CheA. Phosphorylation of the N-terminal regulatory domain activates the methylesterase activity.

It is found in the cytoplasm. The catalysed reaction is [protein]-L-glutamate 5-O-methyl ester + H2O = L-glutamyl-[protein] + methanol + H(+). It catalyses the reaction L-glutaminyl-[protein] + H2O = L-glutamyl-[protein] + NH4(+). Functionally, involved in chemotaxis. Part of a chemotaxis signal transduction system that modulates chemotaxis in response to various stimuli. Catalyzes the demethylation of specific methylglutamate residues introduced into the chemoreceptors (methyl-accepting chemotaxis proteins or MCP) by CheR. Also mediates the irreversible deamidation of specific glutamine residues to glutamic acid. The protein is Protein-glutamate methylesterase/protein-glutamine glutaminase of Methanococcoides burtonii (strain DSM 6242 / NBRC 107633 / OCM 468 / ACE-M).